The primary structure comprises 765 residues: Probable glycosyltransferase STELLO2 (765 aa).

Residues M1–R43 lie on the Cytoplasmic side of the membrane. A helical membrane pass occupies residues I44–T64. Residues D65–V765 lie on the Lumenal side of the membrane. N-linked (GlcNAc...) asparagine glycosylation is found at N235 and N723.

Belongs to the STELLO family. In terms of assembly, homo- and heterodimer with STL1. Interacts with CESA1, CESA3, CESA4, CESA6, CESA7 and CESA8, but not with GOT1. Expressed in cells that are expanding or producing secondary cell walls.

It localises to the golgi apparatus membrane. In terms of biological role, probable glycosyltransferase regulating the assembly and trafficking of cellulose synthase complexes. The protein is Probable glycosyltransferase STELLO2 of Arabidopsis thaliana (Mouse-ear cress).